The primary structure comprises 166 residues: MEAAPSPGSGLCCKPGGRLDMSHGFVHHIRRNQLARDDYDKKVKQAAKEKARRRHTPAPTRPRKPDLQVYLPRHRDGSTHPSNPDCEESGESSSSGSSEPEPPGHQLFCLEYEADSGDITSVIVYQDDDPGRVSEEVSAHTPLEPLMREALKLRIQEEIAKRQSRH.

Over residues 36–49 (RDDYDKKVKQAAKE) the composition is skewed to basic and acidic residues. Residues 36 to 108 (RDDYDKKVKQ…EPEPPGHQLF (73 aa)) form a disordered region.

It belongs to the UPF0561 family.

This is UPF0561 protein C2orf68 homolog from Bos taurus (Bovine).